Here is a 361-residue protein sequence, read N- to C-terminus: Phosphate acyltransferase (361 aa).

The protein belongs to the PlsX family. Homodimer. Probably interacts with PlsY.

Its subcellular location is the cytoplasm. It catalyses the reaction a fatty acyl-[ACP] + phosphate = an acyl phosphate + holo-[ACP]. It functions in the pathway lipid metabolism; phospholipid metabolism. In terms of biological role, catalyzes the reversible formation of acyl-phosphate (acyl-PO(4)) from acyl-[acyl-carrier-protein] (acyl-ACP). This enzyme utilizes acyl-ACP as fatty acyl donor, but not acyl-CoA. The protein is Phosphate acyltransferase of Anaeromyxobacter dehalogenans (strain 2CP-C).